We begin with the raw amino-acid sequence, 579 residues long: Tricyclene synthase 0e23, chloroplastic (579 aa).

A chloroplast-targeting transit peptide spans 1 to 66; the sequence is MAFCISYLGA…ALCLNAHSTS (66 aa). N-linked (GlcNAc...) asparagine glycans are attached at residues asparagine 27, asparagine 204, and asparagine 317. Residues aspartate 336 and aspartate 340 each contribute to the Mg(2+) site. The DDXXD motif signature appears at 336–340; the sequence is DDIFD. 2 N-linked (GlcNAc...) asparagine glycosylation sites follow: asparagine 382 and asparagine 463. Positions 480 and 488 each coordinate Mg(2+). Asparagine 507 carries an N-linked (GlcNAc...) asparagine glycan.

Belongs to the terpene synthase family. Tpsg subfamily. Mg(2+) serves as cofactor. The cofactor is Mn(2+). Accumulates in flowers; mostly expressed in both upper and lower petal lobes, and, to a lower extent, in tube and stamens.

The protein resides in the plastid. The protein localises to the chloroplast stroma. It catalyses the reaction (2E)-geranyl diphosphate = tricyclene + diphosphate. It carries out the reaction (2E)-geranyl diphosphate = (E)-beta-ocimene + diphosphate. The protein operates within secondary metabolite biosynthesis; terpenoid biosynthesis. Its function is as follows. Contributes to floral scent emission. The chain is Tricyclene synthase 0e23, chloroplastic (0e23) from Antirrhinum majus (Garden snapdragon).